We begin with the raw amino-acid sequence, 838 residues long: Valine--tRNA ligase (838 aa).

The 'HIGH' region signature appears at 46-56 (PNLTGTLHIGH). Residues 514-518 (KMSKS) carry the 'KMSKS' region motif. Residue Lys-517 coordinates ATP. Residues 768 to 838 (VDNAANNLAH…HLIAKLTKAE (71 aa)) are a coiled coil.

Belongs to the class-I aminoacyl-tRNA synthetase family. ValS type 1 subfamily. In terms of assembly, monomer.

It is found in the cytoplasm. It catalyses the reaction tRNA(Val) + L-valine + ATP = L-valyl-tRNA(Val) + AMP + diphosphate. Catalyzes the attachment of valine to tRNA(Val). As ValRS can inadvertently accommodate and process structurally similar amino acids such as threonine, to avoid such errors, it has a 'posttransfer' editing activity that hydrolyzes mischarged Thr-tRNA(Val) in a tRNA-dependent manner. The protein is Valine--tRNA ligase of Mycoplasma pneumoniae (strain ATCC 29342 / M129 / Subtype 1) (Mycoplasmoides pneumoniae).